A 625-amino-acid polypeptide reads, in one-letter code: Protein SUPPRESSOR OF GENE SILENCING 3 (625 aa).

Disordered stretches follow at residues 1-20 (MSSRAGPMSKEKNVQGGYRP), 30-148 (AGTR…SAQH), and 161-195 (VDNASEEENDSDALDDSDDDLASDDYDSDVSQKSH). Residues 54-70 (KPGNTSGKTWVSQNSNP) are compositionally biased toward polar residues. Positions 80-94 (GRGSNVSGRGNNVSG) are enriched in low complexity. Positions 161-188 (VDNASEEENDSDALDDSDDDLASDDYDS) are enriched in acidic residues. Coiled-coil stretches lie at residues 452 to 533 (KNKL…QQQE) and 564 to 615 (IEFQ…EQLM).

It belongs to the SGS3 family. Interacts with begomoviruses protein V2. Interacts with SGIP1 in cytoplasmic granules.

It localises to the cytoplasm. Its subcellular location is the perinuclear region. The protein localises to the cytoplasmic granule. Required for post-transcriptional gene silencing and natural virus resistance. May bind nucleic acids and is essential for the biogenesis of trans-acting siRNAs but is not required for silencing induced by IR-PTGS. Involved in the juvenile-to-adult transition regulation. In case of begomoviruses infection, it is targeted by the viral protein V2 leading to suppression of post-transcriptional gene silencing. Involved in the mechanisms necessary for quick response to heat and subsequent heritable transgenerational memory of heat acclimation (global warming) such as early flowering and attenuated immunity; this process includes epigenetic regulation as well as post-transcriptional gene silencing (PTGS). In response to heat, HSFA2 is activated and promotes the expression of REF6 which in turn derepresses HSFA2, thus establishing an inheritable feedback loop able to trigger SGIP1 and subsequent SGIP1-mediated SGS3 degradation; this prevents the biosynthesis of trans-acting siRNA (tasiRNA) and leads to the release of HTT5, which drives early flowering but attenuates immunity. The protein is Protein SUPPRESSOR OF GENE SILENCING 3 of Arabidopsis thaliana (Mouse-ear cress).